Here is a 305-residue protein sequence, read N- to C-terminus: MTPQELQSILSHGLLSFPVTDFDAQGDFNPAGYVKRLEWLAPYGASALFAAGGTGEFFSLAASEYSQVIKTAVDTCATSVPILAGVGGSTRQAIEYAKEAERLGAKGLLLLPHYLTEASQDGVAAHVEAVCKAVNIGVVVYNRNVCRLNADLLERLAERCPNLIGYKDGLGDIELMVSIRRRLGDRFSYLGGLPTAEVYAAAYKALGVPVYSSAVFNFVPKTAMDFYHAIARDDHATVAKLIDDFFLPYLDIRNRKAGYAVSIVKAGARIAGYDAGPVRTPLTDLTAQEYEMLAALMDKMGPQTV.

The protein belongs to the DapA family.

It catalyses the reaction 5-dehydro-4-deoxy-D-glucarate + H(+) = 2,5-dioxopentanoate + CO2 + H2O. The protein operates within carbohydrate acid metabolism; D-glucarate degradation; 2,5-dioxopentanoate from D-glucarate: step 2/2. In Pseudomonas entomophila (strain L48), this protein is Probable 5-dehydro-4-deoxyglucarate dehydratase.